The primary structure comprises 236 residues: Small ribosomal subunit protein uS2c (236 aa).

Belongs to the universal ribosomal protein uS2 family.

The protein resides in the plastid. The protein localises to the chloroplast. The polypeptide is Small ribosomal subunit protein uS2c (rps2) (Vitis vinifera (Grape)).